A 193-amino-acid polypeptide reads, in one-letter code: MARGATYKVQFKRRREGKTNYNKRYKLVDLDKTRMVVRITSNHTITQLVKIGENGDETLVSATSKNLKEFGWLGNGKNTSAAYLTGYLFGKKALNEGYDETILDIGVQPSIKGTKIYAVLKGALDAGLYIPHNDSILPEDSRIRGEHIAQYAESMDDDEKNAKFANYIRCGLSPEEIPDHFESVKNKIDEATQ.

It belongs to the universal ribosomal protein uL18 family. In terms of assembly, part of the 50S ribosomal subunit. Contacts the 5S and 23S rRNAs.

Functionally, this is one of the proteins that bind and probably mediate the attachment of the 5S RNA into the large ribosomal subunit, where it forms part of the central protuberance. The polypeptide is Large ribosomal subunit protein uL18 (Methanosphaera stadtmanae (strain ATCC 43021 / DSM 3091 / JCM 11832 / MCB-3)).